A 361-amino-acid chain; its full sequence is Prostaglandin E2 receptor EP2 subtype (361 aa).

Over residues 1–10 (MGSISNNSGS) the composition is skewed to polar residues. The disordered stretch occupies residues 1–21 (MGSISNNSGSEDCESREWLPS). Over 1-23 (MGSISNNSGSEDCESREWLPSGE) the chain is Extracellular. A glycan (N-linked (GlcNAc...) asparagine) is linked at Asn6. Residues 24–47 (SPAISSAMFSAGVLGNLIALALLA) form a helical membrane-spanning segment. The Cytoplasmic segment spans residues 48-65 (RRWRGDAGRRAGRGNSIS). The helical transmembrane segment at 66–91 (LFHVLVTELVFTDLLGTCLISPVVLA) threads the bilayer. Over 92-111 (SYARNQTLMALEPERRACTY) the chain is Extracellular. The N-linked (GlcNAc...) asparagine glycan is linked to Asn96. Cys109 and Cys187 are oxidised to a cystine. Residues 112–132 (FAFAMTFFSLATMLMLFAMAL) form a helical membrane-spanning segment. The Cytoplasmic segment spans residues 133–151 (ERYLSIGRPYFYQRHVTRR). Residues 152 to 176 (GGLAVLPTIYTVSLLFCSLPLLGYG) traverse the membrane as a helical segment. Topologically, residues 177–198 (QYVQYCPGTWCFIRHGRTAYLQ) are extracellular. Residues 199 to 223 (LYATLLLLLIVAVLACNFSVILNLI) traverse the membrane as a helical segment. Topologically, residues 224–262 (RMHRRSGRSRCGPSLGSCRDGSGTRRRGERVSVAEETDH) are cytoplasmic. The disordered stretch occupies residues 230–253 (GRSRCGPSLGSCRDGSGTRRRGER). Residues 263 to 286 (LILLAIMTITFAICSLPFTIFAYM) traverse the membrane as a helical segment. Asn287 carries an N-linked (GlcNAc...) asparagine glycan. Over 287 to 299 (NETSSRREKWDLQ) the chain is Extracellular. The chain crosses the membrane as a helical span at residues 300–323 (ALRFLSINSIIDPWVFAIFRPPVL). Residues 324 to 361 (RLMRSVLCCRVSLRAQDATQTSCSIQSNASRLTFVDTS) lie on the Cytoplasmic side of the membrane.

The protein belongs to the G-protein coupled receptor 1 family.

The protein localises to the cell membrane. Functionally, receptor for prostaglandin E2 (PGE2). The activity of this receptor is mediated by G(s) proteins that stimulate adenylate cyclase. The subsequent raise in intracellular cAMP is responsible for the relaxing effect of this receptor on smooth muscle. This is Prostaglandin E2 receptor EP2 subtype (PTGER2) from Canis lupus familiaris (Dog).